Here is a 398-residue protein sequence, read N- to C-terminus: Phosphoglycerate kinase (398 aa).

Substrate-binding positions include 21-23 (DFN), arginine 36, 59-62 (HLGR), arginine 119, and arginine 157. Residues lysine 208, glycine 296, glutamate 327, and 354-357 (GGDS) each bind ATP.

The protein belongs to the phosphoglycerate kinase family. In terms of assembly, monomer.

It is found in the cytoplasm. The enzyme catalyses (2R)-3-phosphoglycerate + ATP = (2R)-3-phospho-glyceroyl phosphate + ADP. It participates in carbohydrate degradation; glycolysis; pyruvate from D-glyceraldehyde 3-phosphate: step 2/5. In Streptococcus pyogenes serotype M3 (strain ATCC BAA-595 / MGAS315), this protein is Phosphoglycerate kinase.